The primary structure comprises 259 residues: Deoxyribose-phosphate aldolase (259 aa).

The active-site Proton donor/acceptor is D104. The Schiff-base intermediate with acetaldehyde role is filled by K168. K200 functions as the Proton donor/acceptor in the catalytic mechanism.

The protein belongs to the DeoC/FbaB aldolase family. DeoC type 2 subfamily.

It is found in the cytoplasm. The catalysed reaction is 2-deoxy-D-ribose 5-phosphate = D-glyceraldehyde 3-phosphate + acetaldehyde. The protein operates within carbohydrate degradation; 2-deoxy-D-ribose 1-phosphate degradation; D-glyceraldehyde 3-phosphate and acetaldehyde from 2-deoxy-alpha-D-ribose 1-phosphate: step 2/2. Catalyzes a reversible aldol reaction between acetaldehyde and D-glyceraldehyde 3-phosphate to generate 2-deoxy-D-ribose 5-phosphate. This chain is Deoxyribose-phosphate aldolase, found in Agrobacterium fabrum (strain C58 / ATCC 33970) (Agrobacterium tumefaciens (strain C58)).